The following is a 133-amino-acid chain: Ribosome-binding factor A (133 aa).

It belongs to the RbfA family. Monomer. Binds 30S ribosomal subunits, but not 50S ribosomal subunits or 70S ribosomes.

The protein localises to the cytoplasm. In terms of biological role, one of several proteins that assist in the late maturation steps of the functional core of the 30S ribosomal subunit. Associates with free 30S ribosomal subunits (but not with 30S subunits that are part of 70S ribosomes or polysomes). Required for efficient processing of 16S rRNA. May interact with the 5'-terminal helix region of 16S rRNA. This is Ribosome-binding factor A from Escherichia coli O127:H6 (strain E2348/69 / EPEC).